We begin with the raw amino-acid sequence, 148 residues long: Probable histone H2A.1 (148 aa).

Over residues 1 to 23 the composition is skewed to basic residues; the sequence is MDASTKTKKGAGGRKGGPRKKSV. Disordered regions lie at residues 1–28 and 127–148; these read MDAS…RSTR and KNEK…PKKA. A compositionally biased stretch (low complexity) spans 131–142; it reads AATTTKSPSKAT. 2 consecutive short sequence motifs (SPKK motif) follow at residues 137–140 and 144–147; these read SPSK and SPKK.

It belongs to the histone H2A family. In terms of assembly, the nucleosome is a histone octamer containing two molecules each of H2A, H2B, H3 and H4 assembled in one H3-H4 heterotetramer and two H2A-H2B heterodimers. The octamer wraps approximately 147 bp of DNA.

The protein resides in the nucleus. It is found in the chromosome. In terms of biological role, core component of nucleosome. Nucleosomes wrap and compact DNA into chromatin, limiting DNA accessibility to the cellular machineries which require DNA as a template. Histones thereby play a central role in transcription regulation, DNA repair, DNA replication and chromosomal stability. DNA accessibility is regulated via a complex set of post-translational modifications of histones, also called histone code, and nucleosome remodeling. This is Probable histone H2A.1 from Medicago truncatula (Barrel medic).